The sequence spans 92 residues: Small ribosomal subunit protein uS19 (92 aa).

This sequence belongs to the universal ribosomal protein uS19 family.

In terms of biological role, protein S19 forms a complex with S13 that binds strongly to the 16S ribosomal RNA. This Bartonella quintana (strain Toulouse) (Rochalimaea quintana) protein is Small ribosomal subunit protein uS19.